Consider the following 155-residue polypeptide: Cytochrome c-type biogenesis protein CcmE (155 aa).

The Cytoplasmic portion of the chain corresponds to 1–8; it reads MNPVRKRR. A helical; Signal-anchor for type II membrane protein membrane pass occupies residues 9 to 29; the sequence is LFIVLAILAGVGAAVALALSA. The Periplasmic portion of the chain corresponds to 30 to 155; that stretch reads LQQNINLFYT…YENGKPGGAQ (126 aa). Heme-binding residues include histidine 124 and tyrosine 128.

It belongs to the CcmE/CycJ family.

It localises to the cell inner membrane. In terms of biological role, heme chaperone required for the biogenesis of c-type cytochromes. Transiently binds heme delivered by CcmC and transfers the heme to apo-cytochromes in a process facilitated by CcmF and CcmH. This Azotobacter vinelandii (strain DJ / ATCC BAA-1303) protein is Cytochrome c-type biogenesis protein CcmE.